The following is a 179-amino-acid chain: Ribosomal-protein-serine acetyltransferase (179 aa).

In terms of domain architecture, N-acetyltransferase spans 11 to 172; sequence LELHAVAENH…NDAYDDVNLY (162 aa).

This sequence belongs to the acetyltransferase family. RimL subfamily.

It localises to the cytoplasm. The catalysed reaction is N-terminal L-seryl-[ribosomal protein bL12] + acetyl-CoA = N-terminal N(alpha)-acetyl-L-seryl-[ribosomal protein bL12] + CoA + H(+). This enzyme acetylates the N-terminal serine of ribosomal protein bL12, converting it into the acetylated form of bL12 known as bL7. In Escherichia coli (strain K12), this protein is Ribosomal-protein-serine acetyltransferase.